A 151-amino-acid polypeptide reads, in one-letter code: Putative coiled-coil-helix-coiled-coil-helix domain-containing protein CHCHD2P9, mitochondrial (151 aa).

Residues 1 to 9 constitute a mitochondrion transit peptide; the sequence is MPRGSRSRT. Disordered stretches follow at residues 1–50 and 75–110; these read MPRG…AAAP and TQGHAVTGGFSGGSNAEPARPDIAYQEPQGTQPAQQ. A compositionally biased stretch (low complexity) spans 10–26; the sequence is SRMAPPASRAPQMRAAP. A compositionally biased stretch (pro residues) spans 27-38; the sequence is RPAPVAQPPAAA. 2 stretches are compositionally biased toward low complexity: residues 39-50 and 100-110; these read PPSAVGSSAAAP and QEPQGTQPAQQ. The CHCH domain occupies 111 to 151; that stretch reads QQPCFYGIKQFLECAQNQGDIKLCEDFSKVLKQCRLAKGLA. Short sequence motifs (cx9C motif) lie at residues 114 to 124 and 134 to 144; these read CFYGIKQFLEC and CEDFSKVLKQC. 2 disulfides stabilise this stretch: Cys114–Cys144 and Cys124–Cys134.

It is found in the mitochondrion. This is Putative coiled-coil-helix-coiled-coil-helix domain-containing protein CHCHD2P9, mitochondrial (CHCHD2P9) from Homo sapiens (Human).